The sequence spans 462 residues: UDP-N-acetylmuramoylalanine--D-glutamate ligase (462 aa).

109–115 (GTDGKST) serves as a coordination point for ATP.

This sequence belongs to the MurCDEF family.

The protein localises to the cytoplasm. It carries out the reaction UDP-N-acetyl-alpha-D-muramoyl-L-alanine + D-glutamate + ATP = UDP-N-acetyl-alpha-D-muramoyl-L-alanyl-D-glutamate + ADP + phosphate + H(+). It participates in cell wall biogenesis; peptidoglycan biosynthesis. Functionally, cell wall formation. Catalyzes the addition of glutamate to the nucleotide precursor UDP-N-acetylmuramoyl-L-alanine (UMA). The chain is UDP-N-acetylmuramoylalanine--D-glutamate ligase from Leptospira borgpetersenii serovar Hardjo-bovis (strain JB197).